The chain runs to 58 residues: Large ribosomal subunit protein uL30 (58 aa).

It belongs to the universal ribosomal protein uL30 family. As to quaternary structure, part of the 50S ribosomal subunit.

This is Large ribosomal subunit protein uL30 from Zymomonas mobilis subsp. mobilis (strain ATCC 31821 / ZM4 / CP4).